Reading from the N-terminus, the 1842-residue chain is MALPLWALTFLGLTGLGLSLRSRKPESFRSETELNHLAVDEVTGVVYVGAVNALYQLSADLHVQQHVVTGPFMDNKKCTPPIEASQCHEAVLTDNFNQLLLLDPPGKRLVECGSLFKGICALRAMSNISVRLFYEDGSGEKSFVASNDERVATVGLVTSTRPDGERVLFVGKGNGPHDNGIIVSTRLLDRAEGREAFEAYSDHTTFKAGYLSTNTQQFVAAFEDDFYVFFVFNHQDKHPAKNRTLLARMCKDDPSYYSYVEMDLQCQDPSDPQDSAFGTCLAASVATSGAGRALYAVFSRDGRSTGGPGAGLCVFPLDKVREKIEANRNACYTGAREAGRTIFYKPFHGEIQCGGHLIGASESFPCGSEHLPYPLGSRDGLVATAVLHRGGLNLTAVTVTAENDHTVAFLGTSDGRILKVYLAPDGTSAEYGSIPVDINKKIKQDLALSGNLSSLYAMTQDKVFRLPVQECLSYVTCAQCRDSQDPYCGWCVIEGRCTRKSECSRAEETGHWLWSREKSCVAITDAFPQNMSRRAQGEVRLSVSPLPTLTEDDELLCLFGDSPPHPARVEDDTVICNSPSSIPSTPPGQDHVDVSIQLLLKSGSVFLTSHQYPFYDCREAMSLVENLPCISCASNRWTCQWDLQYYECREASPNPEEGIIRAHMEDNCPQFLAPDPLVIPMNHETEVTFQGKNLETVKVSSLYVGSELLNFEETVTMHESDTFSFRTPKLSHDGNETLPLHLYVKSFGKNIDSKLQVTLYNCSFGRSDCSLCLAADPAYRCVWCRGQNRCVYEALCSNVTSECPPPVITRIQPETGPLGGGILVTIHGSNLGVKADDVKKITVAGQNCAFEPRGYSVSTRIVCAIEASEMPFTGGIEVDVNGKLGHSPPHVQFTYQQPQPLSVEPRQGPQAGGTTLTINGTHLDTGSKEDVRVTLNDVPCEVTKFGAQLQCVTGQQLAPGQVTLEIYYGGSRVPSPGISFTYCENPMIRAFEPLRSFVSGGRSINVTGQGFSLIQKFAMVVIAEPLRSWRRRRREAGALERVTVEGMEYVFYNDTKVVFLSPAVPEEPEAYNLTVLIRMDGHCAPLRTEAGVFEYVADPTFENFTGGVKKQVNKLIHARGTNLNKAMTLEEAEAFVGAERCIMKTLTETDLYCEPPEVQPPPKRRQKRDTAHNLPEFIVKFGSREWVLGRVEYDTRASDVPLSLILPLVMVPMVFIIVVSIYCYWRKSQQAEREYEKIKSQLEGLEESVRDRCKKEFTDLMIEMEDQTNDVHEAGIPTLDYKTYTDRVFFLPSKDGDKDVMITGKLDIPESRRPIVEQALYQFSNLLNSKSFLINFIHTLENQREFSARAKVYFASLLTVALHGKLEYYTDIMRTLFLELMEQYVVAKNPKLMLRRSETVVERMLSNWMSICLYQYLKDSAGEPLYKLFKAIKHQVEKGPVDAVQKKAKYTLNDTGLLGDDVEYAPLTVSVIVQDEGIDAIPVKVLNCDTISQVKEKIIDQVYRTQPCSCWPKPDSVVLEWRPGSTAQILSDLDLTSQREGRWKRINTLMHYNVRDGATLILSKVGVSQQPEDSQQDLPGERHALLEEENRVWHLVRPTDEVDEGKSKRGSMKEKERTKAITEIYLTRLLSVKGTLQQFVDNFFQSVLAPGHAVPPAVKYFFDFLDEQAEKHDIRDEDTIHIWKTNSLPLRFWVNILKNPHFIFDVHVHEVVDASLSVIAQTFMDACTRTEHKLSRDSPSNKLLYAKEISTYKKMVEDYYKGIRQMVQVSDQDMNTHLAEISRAHTDSLNTLVALHQLYQYTQKYYDEIINALEEDPAAQKMQLAFRLQQIAAALENKVTDL.

The N-terminal stretch at 1–19 (MALPLWALTFLGLTGLGLS) is a signal peptide. The region spanning 20-468 (LRSRKPESFR…TQDKVFRLPV (449 aa)) is the Sema domain. Topologically, residues 20 to 1201 (LRSRKPESFR…EYDTRASDVP (1182 aa)) are extracellular. Cystine bridges form between Cys78/Cys87 and Cys112/Cys120. 2 N-linked (GlcNAc...) asparagine glycosylation sites follow: Asn127 and Asn242. 3 cysteine pairs are disulfide-bonded: Cys250/Cys366, Cys266/Cys313, and Cys331/Cys353. N-linked (GlcNAc...) asparagine glycans are attached at residues Asn393 and Asn451. 5 disulfide bridges follow: Cys471/Cys488, Cys477/Cys520, Cys480/Cys497, Cys491/Cys503, and Cys557/Cys576. N-linked (GlcNAc...) asparagine glycosylation occurs at Asn798. 3 consecutive IPT/TIG domains span residues 806 to 895 (PVIT…QFTY), 898 to 982 (PQPL…SFTY), and 986 to 1095 (PMIR…VFEY). 3 N-linked (GlcNAc...) asparagine glycosylation sites follow: Asn919, Asn1053, and Asn1072. A helical membrane pass occupies residues 1202-1222 (LSLILPLVMVPMVFIIVVSIY). Residues 1223-1842 (CYWRKSQQAE…AALENKVTDL (620 aa)) are Cytoplasmic-facing. A phosphoserine mark is found at Ser1240, Ser1248, and Ser1574.

Belongs to the plexin family. As to quaternary structure, monomer, and heterodimer with PLXNB1. Interacts with MET, ARHGEF11 and ARHGEF12. May also interact with MST1R. As to expression, detected in macrophages from spleen and bone marrow (at protein level). Detected in granule cells in the developing cerebellum, dentate gyrus and olfactory bulb. Expressed in neurons and glia in the developing hippocampus.

It localises to the cell membrane. Its function is as follows. Cell surface receptor for SEMA4C, SEMA4D and SEMA4G that plays an important role in cell-cell signaling. Plays a role in glutamatergic synapse development and is required for SEMA4A-mediated excitatory synapse development. Binding to class 4 semaphorins promotes downstream activation of RHOA and phosphorylation of ERBB2 at 'Tyr-1248'. Also acts as a cell surface receptor for angiogenin (ANG); promoting ANG endocytosis and translocation to the cytoplasm or nucleus. Required for normal differentiation and migration of neuronal cells during brain corticogenesis and for normal embryonic brain development. Regulates the migration of cerebellar granule cells in the developing brain. Plays a role in RHOA activation and subsequent changes of the actin cytoskeleton. Plays a role in axon guidance, invasive growth and cell migration. May modulate the activity of RAC1 and CDC42. Down-regulates macrophage migration in wound-healing assays (in vitro). The protein is Plexin-B2 of Mus musculus (Mouse).